Consider the following 96-residue polypeptide: uncharacterized protein (96 aa).

This is an uncharacterized protein from Methanocaldococcus jannaschii (strain ATCC 43067 / DSM 2661 / JAL-1 / JCM 10045 / NBRC 100440) (Methanococcus jannaschii).